Reading from the N-terminus, the 196-residue chain is Elongation factor Ts (196 aa).

The involved in Mg(2+) ion dislocation from EF-Tu stretch occupies residues 80–83 (TDFV).

The protein belongs to the EF-Ts family.

It is found in the cytoplasm. Associates with the EF-Tu.GDP complex and induces the exchange of GDP to GTP. It remains bound to the aminoacyl-tRNA.EF-Tu.GTP complex up to the GTP hydrolysis stage on the ribosome. In Desulfotalea psychrophila (strain LSv54 / DSM 12343), this protein is Elongation factor Ts.